The following is a 5100-amino-acid chain: Hemicentin-2 (5100 aa).

The N-terminal stretch at 1–19 (MTPGAQLLPLLVAISTAVA) is a signal peptide. In terms of domain architecture, VWFA spans 37-211 (DATLAFVFDV…QVSEVLKWVE (175 aa)). N-linked (GlcNAc...) asparagine glycosylation is found at N330, N347, N380, N479, N526, N548, and N675. Ig-like C2-type domains are found at residues 426-515 (PGVP…IVIT), 517-601 (PPPQ…RATT), 609-692 (PQVS…ETVT), 699-782 (PSVS…IQLV), 787-877 (PRLT…LVVT), 882-968 (PQIA…VELV), 973-1058 (PRIH…MWLS), 1063-1156 (PMIK…YVLR), 1161-1239 (PQVQ…WKLE), 1246-1335 (PHWG…AKLV), 1340-1437 (PSIR…FNLA), 1442-1531 (PSLL…FQLS), 1536-1624 (PTIW…TSLE), 1629-1717 (PTIE…YSVE), 1722-1810 (PQLL…VEVS), 1825-1913 (SAHH…KDVT), 1920-2008 (PNIE…LRVN), 2011-2100 (PRIT…VILQ), 2105-2189 (PSIL…KHFN), 2196-2285 (PAFP…QSLE), 2290-2379 (PQVT…FALS), 2384-2473 (PHLT…FSVE), 2478-2566 (PSIE…TQLS), 2571-2662 (PTIL…YHVE), 2667-2758 (PSIS…QDFN), 2781-2871 (PHEE…YELL), 2875-2964 (PPVI…KLFT), 2971-3058 (PQIS…VQLN), 3063-3153 (PSFK…FVLA), 3157-3245 (PPTF…FVVS), 3250-3340 (PQIQ…HTVN), 3345-3432 (PTIK…RNFT), 3438-3523 (PPIL…FQLT), 3528-3609 (PHIE…FRVR), 3614-3702 (PNVV…FRVE), 3707-3793 (PTIQ…LDLR), 3798-3886 (PAIA…YQVT), 3891-3977 (PTIA…MVLT), 3982-4067 (PVVK…TRLV), 4071-4158 (PPVI…VHLT), 4163-4244 (PVLT…QAVS), 4252-4336 (PVLQ…KVVT), and 4343-4428 (PVFQ…ALLA). C449 and C497 form a disulfide bridge. 6 cysteine pairs are disulfide-bonded: C539–C588, C630–C678, C720–C766, C808–C859, C903–C952, and C994–C1042. Omega-N-methylarginine is present on residues R909, R914, and R915. N-linked (GlcNAc...) asparagine glycans are attached at residues N1024 and N1068. 2 disulfide bridges follow: C1091–C1140 and C1182–C1225. N-linked (GlcNAc...) asparagine glycosylation occurs at N1264. Residues 1265–1293 (ASLPCPAQGTPKPRITWRRGPSSEPLNGR) are disordered. A disulfide bond links C1269 and C1319. N1350 carries N-linked (GlcNAc...) asparagine glycosylation. 2 cysteine pairs are disulfide-bonded: C1363–C1421 and C1465–C1515. A glycan (N-linked (GlcNAc...) asparagine) is linked at N1542. 4 disulfides stabilise this stretch: C1559-C1608, C1653-C1701, C1745-C1794, and C1846-C1899. N-linked (GlcNAc...) asparagine glycosylation is found at N1676 and N1787. N1934 is a glycosylation site (N-linked (GlcNAc...) asparagine). Disulfide bonds link C1941/C1990 and C2033/C2084. Residues N2034, N2113, and N2119 are each glycosylated (N-linked (GlcNAc...) asparagine). Disulfide bonds link C2126/C2175 and C2218/C2269. N2309, N2315, N2345, and N2395 each carry an N-linked (GlcNAc...) asparagine glycan. C2314 and C2363 are disulfide-bonded. Cysteines 2408 and 2457 form a disulfide. 5 N-linked (GlcNAc...) asparagine glycosylation sites follow: N2469, N2502, N2541, N2606, and N2688. Cystine bridges form between C2501–C2550 and C2597–C2646. 2 disulfide bridges follow: C2695–C2744 and C2806–C2855. The N-linked (GlcNAc...) asparagine glycan is linked to N2892. A disulfide bridge connects residues C2901 and C2950. N2986 carries an N-linked (GlcNAc...) asparagine glycan. Intrachain disulfides connect C2993–C3042, C3088–C3137, C3180–C3229, C3273–C3324, and C3369–C3418. N3430 carries an N-linked (GlcNAc...) asparagine glycan. 3 cysteine pairs are disulfide-bonded: C3462–C3507, C3551–C3593, and C3637–C3686. N3560 and N3575 each carry an N-linked (GlcNAc...) asparagine glycan. N3717 and N3721 each carry an N-linked (GlcNAc...) asparagine glycan. A disulfide bond links C3728 and C3777. A glycan (N-linked (GlcNAc...) asparagine) is linked at N3806. Cystine bridges form between C3819-C3870, C3912-C3961, C4003-C4051, C4093-C4142, C4184-C4231, C4274-C4322, and C4364-C4412. N4304 carries an N-linked (GlcNAc...) asparagine glycan. The region spanning 4432–4654 (EPRGSRGSMT…QTEENEVGCP (223 aa)) is the Nidogen G2 beta-barrel domain. N-linked (GlcNAc...) asparagine glycosylation is found at N4455 and N4601. In terms of domain architecture, EGF-like 1; calcium-binding spans 4668 to 4708 (DKDECSGGPSPCSHTCRNAPGHFSCSCPTGFSLAWDHRNCR). Intrachain disulfides connect C4672-C4683, C4679-C4692, C4694-C4707, C4713-C4726, C4720-C4735, C4739-C4752, C4758-C4771, C4765-C4780, C4801-C4812, C4808-C4821, and C4823-C4836. The 45-residue stretch at 4709–4753 (DVDECAGNTHLCQEEQRCVNLLGSYNCLASCRPGFRVTADGSNCE) folds into the EGF-like 2; calcium-binding domain. One can recognise an EGF-like 3; calcium-binding domain in the interval 4754–4789 (DVDECLEQLDECHYNQLCENTPGGHHCGCPRGYRQQ). The EGF-like 4; calcium-binding domain maps to 4797–4837 (DINECLQLPTPCVYQCQNLQGSYRCLCPPGQTLLRDGRTCI). N-linked (GlcNAc...) asparagine glycosylation occurs at N4845. In terms of domain architecture, EGF-like 5; calcium-binding spans 4904 to 4943 (DLDECRVRSLCQHACQNTEGSYYCLCPSGYRLLPSGKNCQ). Intrachain disulfides connect C4908–C4918, C4914–C4927, and C4929–C4942. A glycan (N-linked (GlcNAc...) asparagine) is linked at N5035.

Reported to be phosphorylated; however as this position is extracellular, the in vivo relevance is unsure. In neonatal skin, localized in the pericellular space of basal epidermal keratinocytes (at protein level). In adult skin, restricted to basal keratinocytes of hair follicles and the interfollicular epidermis. Absent from the myotendinous junction but present in skeletal muscle (at protein level). Expressed in the pericellular extracellular matrix of epithelial cells in a number of tissues including embryonic trophectoderm and adult skin and tongue. Also present in the extracellular matrix of some, but not all, blood vessels. Expressed primarily in epithelial cells in the embryonic epidermis, lung, intestine, skeletal hindlimb muscle, tongue and the muscular layers of the esophagus.

Its subcellular location is the secreted. The protein resides in the extracellular space. The protein localises to the extracellular matrix. It localises to the cleavage furrow. This chain is Hemicentin-2 (Hmcn2), found in Mus musculus (Mouse).